The following is a 108-amino-acid chain: MPAQGHRLYVKAKHLSFQRSKHVIHPGTSLVKIEGCDSKEEAQFYLGKRICFVYKSNKPVRGSKIRVIWGTVSRPHGNSGVVRARFTHNLPPKTFGASLRVMLYPSNV.

Belongs to the eukaryotic ribosomal protein eL33 family. In terms of assembly, component of the large ribosomal subunit (LSU). Mature yeast ribosomes consist of a small (40S) and a large (60S) subunit. The 40S small subunit contains 1 molecule of ribosomal RNA (18S rRNA) and at least 33 different proteins. The large 60S subunit contains 3 rRNA molecules (25S, 5.8S and 5S rRNA) and at least 46 different proteins.

The protein localises to the cytoplasm. Its subcellular location is the nucleus. The protein resides in the nucleolus. Functionally, component of the ribosome, a large ribonucleoprotein complex responsible for the synthesis of proteins in the cell. The small ribosomal subunit (SSU) binds messenger RNAs (mRNAs) and translates the encoded message by selecting cognate aminoacyl-transfer RNA (tRNA) molecules. The large subunit (LSU) contains the ribosomal catalytic site termed the peptidyl transferase center (PTC), which catalyzes the formation of peptide bonds, thereby polymerizing the amino acids delivered by tRNAs into a polypeptide chain. The nascent polypeptides leave the ribosome through a tunnel in the LSU and interact with protein factors that function in enzymatic processing, targeting, and the membrane insertion of nascent chains at the exit of the ribosomal tunnel. The polypeptide is Large ribosomal subunit protein eL33A (rpl35b) (Schizosaccharomyces pombe (strain 972 / ATCC 24843) (Fission yeast)).